The primary structure comprises 608 residues: DNA mismatch repair protein MutL (608 aa).

A disordered region spans residues A363–V397. Over residues R369–P390 the composition is skewed to basic and acidic residues.

It belongs to the DNA mismatch repair MutL/HexB family.

Its function is as follows. This protein is involved in the repair of mismatches in DNA. It is required for dam-dependent methyl-directed DNA mismatch repair. May act as a 'molecular matchmaker', a protein that promotes the formation of a stable complex between two or more DNA-binding proteins in an ATP-dependent manner without itself being part of a final effector complex. In Pelobacter propionicus (strain DSM 2379 / NBRC 103807 / OttBd1), this protein is DNA mismatch repair protein MutL.